Consider the following 502-residue polypeptide: Mannitol 2-dehydrogenase (502 aa).

Position 37 to 48 (37 to 48) interacts with NAD(+); it reads IVHIGVGGFHRA.

This sequence belongs to the mannitol dehydrogenase family. In terms of assembly, monomer.

The catalysed reaction is D-mannitol + NAD(+) = D-fructose + NADH + H(+). Catalyzes the NAD(H)-dependent interconversion of D-fructose and D-mannitol in the mannitol metabolic pathway. The sequence is that of Mannitol 2-dehydrogenase from Neosartorya fischeri (strain ATCC 1020 / DSM 3700 / CBS 544.65 / FGSC A1164 / JCM 1740 / NRRL 181 / WB 181) (Aspergillus fischerianus).